Reading from the N-terminus, the 195-residue chain is Shikimate kinase (195 aa).

31–36 (GAGKSC) is a binding site for ATP. Position 35 (serine 35) interacts with Mg(2+). Substrate is bound by residues aspartate 53, arginine 77, and glycine 99. Arginine 137 contacts ATP. Arginine 156 contacts substrate.

The protein belongs to the shikimate kinase family. As to quaternary structure, monomer. It depends on Mg(2+) as a cofactor.

It localises to the cytoplasm. It carries out the reaction shikimate + ATP = 3-phosphoshikimate + ADP + H(+). The protein operates within metabolic intermediate biosynthesis; chorismate biosynthesis; chorismate from D-erythrose 4-phosphate and phosphoenolpyruvate: step 5/7. In terms of biological role, catalyzes the specific phosphorylation of the 3-hydroxyl group of shikimic acid using ATP as a cosubstrate. The sequence is that of Shikimate kinase from Paramagnetospirillum magneticum (strain ATCC 700264 / AMB-1) (Magnetospirillum magneticum).